Here is a 104-residue protein sequence, read N- to C-terminus: Urease subunit gamma (104 aa).

It belongs to the urease gamma subunit family. As to quaternary structure, heterotrimer of UreA (gamma), UreB (beta) and UreC (alpha) subunits. Three heterotrimers associate to form the active enzyme.

The protein localises to the cytoplasm. It catalyses the reaction urea + 2 H2O + H(+) = hydrogencarbonate + 2 NH4(+). Its pathway is nitrogen metabolism; urea degradation; CO(2) and NH(3) from urea (urease route): step 1/1. In Actinomyces naeslundii, this protein is Urease subunit gamma.